We begin with the raw amino-acid sequence, 146 residues long: Globin (146 aa).

The residue at position 1 (alanine 1) is an N-acetylalanine. The Globin domain occupies 1–146 (ALSAAEAEVV…IIDAMKKAGK (146 aa)). Histidine 95 contributes to the heme b binding site.

Belongs to the globin family. Monomer.

This Dolabella auricularia (Shoulderblade sea cat) protein is Globin.